Here is a 767-residue protein sequence, read N- to C-terminus: Slo-interacting protein 1 (767 aa).

One can recognise a PDZ domain in the interval 202-280 (QQSSTDTNKG…SVTLLVSRIL (79 aa)). 2 disordered regions span residues 521–557 (GNAA…NPDE) and 744–767 (KEER…QQQQ). A compositionally biased stretch (polar residues) spans 532–555 (NSSSAYNTGDSNNSASPHQNTTNP). The span at 744–755 (KEERKRHIERAR) shows a compositional bias: basic and acidic residues.

Interacts with Slo. In terms of tissue distribution, in embryos, it is expressed throughout the CNS and in several peripheral locations. Colocalizes with Slo.

Its function is as follows. May selectively reduce calcium-activated potassium channel (Slo) currents by reducing the number of Slo channels in the plasma membrane. The protein is Slo-interacting protein 1 (Slip1) of Drosophila melanogaster (Fruit fly).